The sequence spans 542 residues: TOM1-like protein 7 (542 aa).

Residues 29–158 enclose the VHS domain; that stretch reads ATSELLRTPD…ELKRCGVKFP (130 aa). Ser-161 is subject to Phosphoserine. Residues 201–289 enclose the GAT domain; it reads EIESLSLSSL…VLARHDAIAS (89 aa). The segment at 303-340 is disordered; that stretch reads RETSSSLKTCGAAALESADSESSSSSSSSESETDEVED. Over residues 314–332 the composition is skewed to low complexity; sequence AAALESADSESSSSSSSSE. Ser-521 bears the Phosphoserine mark. The tract at residues 522–542 is disordered; it reads FPARATGTSGAATAATVDRQP. Residues 524–542 show a composition bias toward low complexity; sequence ARATGTSGAATAATVDRQP.

This sequence belongs to the TOM1 family. In terms of tissue distribution, preferentially expressed in flowers.

Its subcellular location is the membrane. In terms of biological role, might contribute to the loading of the ESCRT machinery. This Arabidopsis thaliana (Mouse-ear cress) protein is TOM1-like protein 7.